Consider the following 258-residue polypeptide: Hydroxyacylglutathione hydrolase (258 aa).

7 residues coordinate Zn(2+): His-56, His-58, Asp-60, His-61, His-112, Asp-132, and His-170.

The protein belongs to the metallo-beta-lactamase superfamily. Glyoxalase II family. In terms of assembly, monomer. The cofactor is Zn(2+).

The enzyme catalyses an S-(2-hydroxyacyl)glutathione + H2O = a 2-hydroxy carboxylate + glutathione + H(+). Its pathway is secondary metabolite metabolism; methylglyoxal degradation; (R)-lactate from methylglyoxal: step 2/2. Thiolesterase that catalyzes the hydrolysis of S-D-lactoyl-glutathione to form glutathione and D-lactic acid. The protein is Hydroxyacylglutathione hydrolase of Pseudomonas paraeruginosa (strain DSM 24068 / PA7) (Pseudomonas aeruginosa (strain PA7)).